The following is a 275-amino-acid chain: MSIRLYKSYTPGTRNRALSSFTEITKTKPEKSLIQKNHRSKGRNNRGVITIRHRGGGHKRRYRIIDFGRKKHNVEGVVAAIEYDPNRNARIALLHYTDGEKRYILHPNNLNVGDRVVSGMEAELVIGNALPLEKIPLGASVHNIELIPNRGGQIVRAAGTSAKILAKEGDYVTLRLPSKEIRLIRKECFATIGEVSNNDAFLVQSGKAGRTRWLGKRPTVRGSVMNPCDHPHGGGEGRAPIGRTRPLTPWGKPALGIKTRKNKKASDAYILRRRS.

The disordered stretch occupies residues T219–L255.

The protein belongs to the universal ribosomal protein uL2 family. In terms of assembly, part of the 50S ribosomal subunit.

It localises to the plastid. The protein localises to the chloroplast. The chain is Large ribosomal subunit protein uL2c (rpl2) from Trieres chinensis (Marine centric diatom).